A 412-amino-acid polypeptide reads, in one-letter code: Tyrosine--tRNA ligase 1 (412 aa).

Tyr-41 provides a ligand contact to L-tyrosine. The short motif at 46-55 (ATADSLHVGH) is the 'HIGH' region element. Residues Tyr-174 and Gln-178 each coordinate L-tyrosine. The 'KMSKS' region signature appears at 234–238 (KMGKS). Lys-237 is a binding site for ATP. The 64-residue stretch at 348 to 411 (LSLTDLLLEH…KKQHLHLRLE (64 aa)) folds into the S4 RNA-binding domain.

This sequence belongs to the class-I aminoacyl-tRNA synthetase family. TyrS type 1 subfamily. In terms of assembly, homodimer.

It localises to the cytoplasm. The catalysed reaction is tRNA(Tyr) + L-tyrosine + ATP = L-tyrosyl-tRNA(Tyr) + AMP + diphosphate + H(+). Functionally, catalyzes the attachment of tyrosine to tRNA(Tyr) in a two-step reaction: tyrosine is first activated by ATP to form Tyr-AMP and then transferred to the acceptor end of tRNA(Tyr). The polypeptide is Tyrosine--tRNA ligase 1 (Pseudomonas aeruginosa (strain ATCC 15692 / DSM 22644 / CIP 104116 / JCM 14847 / LMG 12228 / 1C / PRS 101 / PAO1)).